We begin with the raw amino-acid sequence, 284 residues long: Pollen allergen Phl p 5b (284 aa).

Positions 1–19 (AAAAVPRRGPRGGPGRSYT) are cleaved as a signal peptide. The tract at residues 1 to 21 (AAAAVPRRGPRGGPGRSYTAD) is disordered.

This sequence belongs to the Poa p IX/Phl p VI allergen family. Homodimer; disulfide-linked.

Its function is as follows. Has ribonuclease activity. May be involved in host-pathogen interactions. In Phleum pratense (Common timothy), this protein is Pollen allergen Phl p 5b.